We begin with the raw amino-acid sequence, 147 residues long: 3-dehydroquinate dehydratase (147 aa).

Catalysis depends on Tyr-23, which acts as the Proton acceptor. Substrate-binding residues include Asn-75, His-81, and Asp-88. His-101 functions as the Proton donor in the catalytic mechanism. Substrate contacts are provided by residues 102 to 103 and Arg-112; that span reads LS.

It belongs to the type-II 3-dehydroquinase family. In terms of assembly, homododecamer.

The enzyme catalyses 3-dehydroquinate = 3-dehydroshikimate + H2O. Its pathway is metabolic intermediate biosynthesis; chorismate biosynthesis; chorismate from D-erythrose 4-phosphate and phosphoenolpyruvate: step 3/7. Its function is as follows. Catalyzes a trans-dehydration via an enolate intermediate. This chain is 3-dehydroquinate dehydratase, found in Nitrosococcus oceani (strain ATCC 19707 / BCRC 17464 / JCM 30415 / NCIMB 11848 / C-107).